The following is a 390-amino-acid chain: 4-hydroxy-3-methylbut-2-en-1-yl diphosphate synthase (flavodoxin) (390 aa).

Residues Cys281, Cys284, Cys316, and Glu323 each coordinate [4Fe-4S] cluster.

It belongs to the IspG family. [4Fe-4S] cluster is required as a cofactor.

It carries out the reaction (2E)-4-hydroxy-3-methylbut-2-enyl diphosphate + oxidized [flavodoxin] + H2O + 2 H(+) = 2-C-methyl-D-erythritol 2,4-cyclic diphosphate + reduced [flavodoxin]. The protein operates within isoprenoid biosynthesis; isopentenyl diphosphate biosynthesis via DXP pathway; isopentenyl diphosphate from 1-deoxy-D-xylulose 5-phosphate: step 5/6. Its function is as follows. Converts 2C-methyl-D-erythritol 2,4-cyclodiphosphate (ME-2,4cPP) into 1-hydroxy-2-methyl-2-(E)-butenyl 4-diphosphate. This is 4-hydroxy-3-methylbut-2-en-1-yl diphosphate synthase (flavodoxin) from Salinispora tropica (strain ATCC BAA-916 / DSM 44818 / JCM 13857 / NBRC 105044 / CNB-440).